Reading from the N-terminus, the 317-residue chain is Nicotianamine synthase (317 aa).

It belongs to the nicotianamine synthase (NAS)-like family. Homomultimer. In terms of tissue distribution, leaves and roots.

The catalysed reaction is 3 S-adenosyl-L-methionine = nicotianamine + 3 S-methyl-5'-thioadenosine + 3 H(+). In terms of biological role, synthesizes nicotianamine, a polyamine that serves as a sensor for the physiological iron status within the plant, and/or might be involved in the transport of iron. The chain is Nicotianamine synthase (CHLN) from Solanum lycopersicum (Tomato).